We begin with the raw amino-acid sequence, 429 residues long: 3-phosphoshikimate 1-carboxyvinyltransferase (429 aa).

3-phosphoshikimate is bound by residues Lys-11, Ser-12, and Arg-16. Lys-11 contacts phosphoenolpyruvate. Phosphoenolpyruvate contacts are provided by Gly-82 and Arg-110. Residues Ser-155, Gln-157, Asp-302, and Lys-329 each contribute to the 3-phosphoshikimate site. Position 157 (Gln-157) interacts with phosphoenolpyruvate. Catalysis depends on Asp-302, which acts as the Proton acceptor. Positions 333 and 385 each coordinate phosphoenolpyruvate.

The protein belongs to the EPSP synthase family. Monomer.

It localises to the cytoplasm. The catalysed reaction is 3-phosphoshikimate + phosphoenolpyruvate = 5-O-(1-carboxyvinyl)-3-phosphoshikimate + phosphate. It functions in the pathway metabolic intermediate biosynthesis; chorismate biosynthesis; chorismate from D-erythrose 4-phosphate and phosphoenolpyruvate: step 6/7. Functionally, catalyzes the transfer of the enolpyruvyl moiety of phosphoenolpyruvate (PEP) to the 5-hydroxyl of shikimate-3-phosphate (S3P) to produce enolpyruvyl shikimate-3-phosphate and inorganic phosphate. This chain is 3-phosphoshikimate 1-carboxyvinyltransferase, found in Helicobacter pylori (strain G27).